The chain runs to 134 residues: Replication enhancer protein (134 aa).

This sequence belongs to the geminiviridae replication enhancer protein family. In terms of assembly, homooligomer. Interacts with the replication-associated protein (REP). Interacts with host proliferating cell nuclear antigen (PCNA). Interacts with host retinoblastoma-related protein 1 (RBR1), and may thereby deregulate the host cell cycle. Oligomerization and interaction with PCNA are necessary for optimal replication enhancement.

Increases viral DNA accumulation. Enhances infectivity and symptom expression. This is Replication enhancer protein from Manihot esculenta (Cassava).